A 163-amino-acid polypeptide reads, in one-letter code: Cyclic pyranopterin monophosphate synthase (163 aa).

Substrate is bound by residues 75 to 77 (MCH) and 115 to 116 (ME). Residue D130 is part of the active site.

Belongs to the MoaC family. In terms of assembly, homohexamer; trimer of dimers.

It catalyses the reaction (8S)-3',8-cyclo-7,8-dihydroguanosine 5'-triphosphate = cyclic pyranopterin phosphate + diphosphate. It functions in the pathway cofactor biosynthesis; molybdopterin biosynthesis. In terms of biological role, catalyzes the conversion of (8S)-3',8-cyclo-7,8-dihydroguanosine 5'-triphosphate to cyclic pyranopterin monophosphate (cPMP). The polypeptide is Cyclic pyranopterin monophosphate synthase (Bacillus pumilus (strain SAFR-032)).